The following is a 438-amino-acid chain: EF-hand calcium-binding domain-containing protein 3 (438 aa).

EF-hand domains are found at residues 47–82 and 83–118; these read SQMA…LGMN and LTKH…KNLF. Ca(2+)-binding residues include Asp-96, Asp-98, Asp-100, Lys-102, and Asp-107. Position 279 is a phosphotyrosine (Tyr-279). The span at 405 to 415 shows a compositional bias: low complexity; sequence SSHNSRSSSSS. A disordered region spans residues 405–438; sequence SSHNSRSSSSSDTSECYTDSGRKRKRKGLKGFQQ. A compositionally biased stretch (basic residues) spans 426–438; sequence RKRKRKGLKGFQQ.

The sequence is that of EF-hand calcium-binding domain-containing protein 3 (EFCAB3) from Homo sapiens (Human).